Consider the following 118-residue polypeptide: Neutral phospholipase A2 homolog taipoxin beta chain 2 (118 aa).

7 cysteine pairs are disulfide-bonded: Cys11–Cys71, Cys27–Cys117, Cys29–Cys45, Cys44–Cys98, Cys51–Cys91, Cys60–Cys84, and Cys78–Cys89.

The protein belongs to the phospholipase A2 family. Group I subfamily. D49 sub-subfamily. Heterotrimer of alpha, beta, and gamma chains; non-covalently linked. Expressed by the venom gland.

Its subcellular location is the secreted. Its function is as follows. Heterotrimer: Snake venom phospholipase A2 (PLA2) heterotrimer that acts as a potent presynaptic neurotoxin by blocking synaptic transmission and synaptic vesicle recycling. May act by binding in a calcium-dependent fashion to neurotonal pentraxin-1 (NPTX1) and neurotonal pentraxin-2 (NPTX2), but not to neuronal pentraxin receptor (NPTXR). Also binds to taipoxin-associated calcium binding protein 49 (RCN2), a protein localized in the lumen of endoplasmic reticulum. Functionally, monomer (beta chain): Snake venom phospholipase A2 homolog that is neither toxic nor enzymatically active. Does not bind calcium. The polypeptide is Neutral phospholipase A2 homolog taipoxin beta chain 2 (Oxyuranus scutellatus scutellatus (Australian taipan)).